The chain runs to 148 residues: Glutamyl-tRNA(Gln) amidotransferase subunit C, mitochondrial (148 aa).

Belongs to the GatC family. In terms of assembly, subunit of the heterotrimeric GatCAB amidotransferase (AdT) complex, composed of A, B and C subunits.

Its subcellular location is the mitochondrion. It catalyses the reaction L-glutamyl-tRNA(Gln) + L-glutamine + ATP + H2O = L-glutaminyl-tRNA(Gln) + L-glutamate + ADP + phosphate + H(+). Its function is as follows. Allows the formation of correctly charged Gln-tRNA(Gln) through the transamidation of misacylated Glu-tRNA(Gln) in the mitochondria. The reaction takes place in the presence of glutamine and ATP through an activated gamma-phospho-Glu-tRNA(Gln). In Drosophila yakuba (Fruit fly), this protein is Glutamyl-tRNA(Gln) amidotransferase subunit C, mitochondrial.